The following is a 308-amino-acid chain: Mitochondrial import receptor subunit TOM40B (308 aa).

The tract at residues 1 to 29 (MGNTLGLAPMGALPRRSPRREEPLPNPGS) is disordered. Residues 281-308 (PLPVTLALGAFLNHWRNRFHCGFSITVG) form a required for mitochondrial targeting region.

This sequence belongs to the Tom40 family. Forms part of the preprotein translocase of the outer mitochondrial membrane (TOM complex) containing TOMM22, TOMM40, TOMM40L and TOMM70. Interacts with mitochondrial targeting sequences.

It localises to the mitochondrion outer membrane. Its function is as follows. Potential channel-forming protein implicated in import of protein precursors into mitochondria. The polypeptide is Mitochondrial import receptor subunit TOM40B (Bos taurus (Bovine)).